The following is a 515-amino-acid chain: Alpha-1B adrenergic receptor (515 aa).

Topologically, residues 1-45 are extracellular; it reads MNPDLDTGHNTSAPAQWGELKDANFTGPNQTSSNSTLPQLDVTRA. 3 N-linked (GlcNAc...) asparagine glycosylation sites follow: asparagine 10, asparagine 24, and asparagine 34. The chain crosses the membrane as a helical span at residues 46 to 70; that stretch reads ISVGLVLGAFILFAIVGNILVILSV. Residues 71–83 lie on the Cytoplasmic side of the membrane; the sequence is ACNRHLRTPTNYF. A helical transmembrane segment spans residues 84 to 105; sequence IVNLAIADLLLSFTVLPFSATL. Over 106–115 the chain is Extracellular; it reads EVLGYWVLGR. The helical transmembrane segment at 116-141 threads the bilayer; sequence IFCDIWAAVDVLCCTASILSLCAISI. Cysteine 118 and cysteine 195 are oxidised to a cystine. Over 142-161 the chain is Cytoplasmic; sequence DRYIGVRYSLQYPTLVTRRK. The helical transmembrane segment at 162 to 184 threads the bilayer; sequence AILALLSVWVLSTVISIGPLLGW. Over 185–201 the chain is Extracellular; the sequence is KEPAPNDDKECGVTEEP. The helical transmembrane segment at 202-224 threads the bilayer; sequence FYALFSSLGSFYIPLAVILVMYC. The Cytoplasmic segment spans residues 225-295; sequence RVYIVAKRTT…FSREKKAAKT (71 aa). Position 264 is a phosphothreonine (threonine 264). A helical transmembrane segment spans residues 296 to 319; that stretch reads LGIVVGMFILCWLPFFIALPLGSL. At 320–326 the chain is on the extracellular side; it reads FSTLKPP. A helical transmembrane segment spans residues 327–351; that stretch reads DAVFKVVFWLGYFNSCLNPIIYPCS. Residues 352-515 lie on the Cytoplasmic side of the membrane; it reads SKEFKRAFMR…SNMPLAPGHF (164 aa). Residue cysteine 365 is the site of S-palmitoyl cysteine attachment. Residues 368-378 carry the Nuclear localization signal motif; that stretch reads RSGRRRRRRRR. Disordered stretches follow at residues 392 to 428 and 473 to 515; these read GGSL…SPGY and LLGE…PGHF. Polar residues predominate over residues 410–424; that stretch reads SCMSGSQRTLPSASP.

This sequence belongs to the G-protein coupled receptor 1 family. Adrenergic receptor subfamily. ADRA1B sub-subfamily. As to quaternary structure, homo- and heterooligomer. Heterooligomerizes with ADRA1B homooligomers in cardiac myocytes. Interacts with CAVIN4.

The protein resides in the nucleus membrane. It is found in the cell membrane. Its subcellular location is the cytoplasm. It localises to the membrane. The protein localises to the caveola. In terms of biological role, this alpha-adrenergic receptor mediates its action by association with G proteins that activate a phosphatidylinositol-calcium second messenger system. Its effect is mediated by G(q) and G(11) proteins. Nuclear ADRA1A-ADRA1B heterooligomers regulate phenylephrine (PE)-stimulated ERK signaling in cardiac myocytes. This is Alpha-1B adrenergic receptor (ADRA1B) from Mesocricetus auratus (Golden hamster).